The chain runs to 556 residues: Genetic interactor of prohibitins 3, mitochondrial (556 aa).

The N-terminal 21 residues, 1-21 (MLNLCHALRGVRQFSCSVIVK), are a transit peptide targeting the mitochondrion. One can recognise a CP-type G domain in the interval 113-305 (ESTLNDILNY…LFDLPGYSTS (193 aa)).

The protein belongs to the TRAFAC class YlqF/YawG GTPase family. GEP3 subfamily.

It localises to the mitochondrion. In terms of biological role, interacts genetically with prohibitins and thus may be involved in the mitochondrial lipid metabolism. This chain is Genetic interactor of prohibitins 3, mitochondrial (GEP3), found in Saccharomyces cerevisiae (strain AWRI1631) (Baker's yeast).